We begin with the raw amino-acid sequence, 81 residues long: Large ribosomal subunit protein bL31B (81 aa).

It belongs to the bacterial ribosomal protein bL31 family. Type B subfamily. In terms of assembly, part of the 50S ribosomal subunit.

This chain is Large ribosomal subunit protein bL31B, found in Lactobacillus helveticus (strain DPC 4571).